Consider the following 633-residue polypeptide: Copine-7 (633 aa).

2 C2 domains span residues 2–133 (SAGS…MRVS) and 212–339 (NAGK…AQWD). D245, D251, D307, D309, and D315 together coordinate Ca(2+). One can recognise a VWFA domain in the interval 382–581 (HFTVAIDFTA…PALRDIVQFV (200 aa)).

This sequence belongs to the copine family. It depends on Ca(2+) as a cofactor. As to expression, expressed in the brain, testis, thymus and small intestine.

The protein localises to the cytoplasm. The protein resides in the nucleus. Its subcellular location is the cell membrane. Functionally, calcium-dependent phospholipid-binding protein that may play a role in calcium-mediated intracellular processes. The sequence is that of Copine-7 from Homo sapiens (Human).